A 490-amino-acid polypeptide reads, in one-letter code: Metal cation symporter ZIP14 (490 aa).

The first 28 residues, 1-28, serve as a signal peptide directing secretion; the sequence is MKLLHPAFQSCLLLTLLGLWRTTPEAHA. The Extracellular portion of the chain corresponds to 29–155; that stretch reads SSPGAPAISA…PSAVEVWGYG (127 aa). Asn-75, Asn-85, and Asn-100 each carry an N-linked (GlcNAc...) asparagine glycan. A helical membrane pass occupies residues 156 to 176; sequence LLCVTVISLCSLLGASVVPFM. Topologically, residues 177-184 are cytoplasmic; that stretch reads KKTFYKRL. The helical transmembrane segment at 185–205 threads the bilayer; sequence LLYFIALAIGTLYSNALFQLI. The Extracellular segment spans residues 206-222; the sequence is PEAFGFNPLEDYYVSKS. A helical transmembrane segment spans residues 223–243; the sequence is AVVFGGFYLFFFTEKILKILL. Residues 244–395 are Cytoplasmic-facing; it reads KQKNEHHHGH…LLNAGMSIQQ (152 aa). An HHHGHXHX-motif motif is present at residues 249 to 256; that stretch reads HHHGHSHY. The XEXPHE-motif signature appears at 374-379; it reads EEFPHE. Residues 396–416 traverse the membrane as a helical segment; that stretch reads ALFFNFLSACCCYLGLAFGIL. Residues 417 to 422 lie on the Extracellular side of the membrane; it reads AGSHFS. The helical transmembrane segment at 423 to 443 threads the bilayer; sequence ANWIFALAGGMFLYISLADMF. The Cytoplasmic portion of the chain corresponds to 444 to 458; that stretch reads PEMNEVCQEDERKGS. The chain crosses the membrane as a helical span at residues 459-479; that stretch reads ILIPFVIQNLGLLTGFTIMVV. The Extracellular portion of the chain corresponds to 480 to 490; the sequence is LTMYSGQIQIG.

Belongs to the ZIP transporter (TC 2.A.5) family. As to quaternary structure, homotrimer. Post-translationally, ubiquitinated. Ubiquitination occurs upon iron depletion. The ubiquitinated form undergoes proteasomal degradation. In terms of processing, N-glycosylated. N-glycosylation at Asn-100 is required for iron-regulated extraction of the transporter from membranes and subsequent proteasomal degradation.

It localises to the cell membrane. Its subcellular location is the apical cell membrane. The protein resides in the basolateral cell membrane. It is found in the early endosome membrane. The protein localises to the late endosome membrane. It localises to the lysosome membrane. It carries out the reaction Zn(2+)(out) + 2 hydrogencarbonate(out) = Zn(2+)(in) + 2 hydrogencarbonate(in). The catalysed reaction is Mn(2+)(out) + 2 hydrogencarbonate(out) = Mn(2+)(in) + 2 hydrogencarbonate(in). The enzyme catalyses Fe(2+)(out) + 2 hydrogencarbonate(out) = Fe(2+)(in) + 2 hydrogencarbonate(in). It catalyses the reaction Cd(2+)(out) + 2 hydrogencarbonate(out) = Cd(2+)(in) + 2 hydrogencarbonate(in). Electroneutral transporter of the plasma membrane mediating the cellular uptake of the divalent metal cations zinc, manganese and iron that are important for tissue homeostasis, metabolism, development and immunity. Functions as an energy-dependent symporter, transporting through the membranes an electroneutral complex composed of a divalent metal cation and two bicarbonate anions. Beside these endogenous cellular substrates, can also import cadmium a non-essential metal which is cytotoxic and carcinogenic. Controls the cellular uptake by the intestinal epithelium of systemic zinc, which is in turn required to maintain tight junctions and the intestinal permeability. Modifies the activity of zinc-dependent phosphodiesterases, thereby indirectly regulating G protein-coupled receptor signaling pathways important for gluconeogenesis and chondrocyte differentiation. Regulates insulin receptor signaling, glucose uptake, glycogen synthesis and gluconeogenesis in hepatocytes through the zinc-dependent intracellular catabolism of insulin. Through zinc cellular uptake also plays a role in the adaptation of cells to endoplasmic reticulum stress. Major manganese transporter of the basolateral membrane of intestinal epithelial cells, it plays a central role in manganese systemic homeostasis through intestinal manganese uptake. Also involved in manganese extracellular uptake by cells of the blood-brain barrier. May also play a role in manganese and zinc homeostasis participating in their elimination from the blood through the hepatobiliary excretion. Also functions in the extracellular uptake of free iron. May also function intracellularly and mediate the transport from endosomes to cytosol of iron endocytosed by transferrin. Plays a role in innate immunity by regulating the expression of cytokines by activated macrophages. The sequence is that of Metal cation symporter ZIP14 from Pongo abelii (Sumatran orangutan).